Consider the following 562-residue polypeptide: MSEQKLSDNERLKAESNFLRGTIELDLKNDLTGGFTGDNFQLIRLHGMYQQDDRDIRAERAQQKLEPLHNVMLRARMPGGIITPEQWLGIDKFAHDHTMYGSIRLTTRQTFQFHGVLKPNIKMMHQTLNKYGIDSIATAGDVNRNVLCTSNPVESELHQEAYEWAKKISEHLLPKTRAYAEIWLDGEKLGPDEEPILGSTYLPRKFKTTVVIPPHNDIDVHANDLNFVAIAEDGKLVGFNVLVGGGLAMTHGNKETFPRKADDFGFIRKEDTLKFAEAVVTTQRDWGNRVNRQNAKTKYTLERVGVDAFKAEVEKRTGIKFEESRPYVFTSRGDRFGWVEGIDGKQHLTLFIENGRILDFPGKPLKTGLAEIAKIHKGDFRMTANQNLIIAGVPKKDKAKIEKIARAHGLIDDAITEQRKNSMACVALPTCPLAMAEAERFLPAFTTQIEAVMAKHGLADDHVIFRVTGCPNGCGRAMLAEIGLVGKAMDRYNFYIGGNREGTRIPRQYRENITSAEILKEIDALLGRWAKERNENEGFGDFVIRAGIVKPVVDSAKDFYAA.

Residues Cys-425, Cys-431, Cys-470, and Cys-474 each coordinate [4Fe-4S] cluster. Siroheme is bound at residue Cys-474.

This sequence belongs to the nitrite and sulfite reductase 4Fe-4S domain family. Alpha(8)-beta(8). The alpha component is a flavoprotein, the beta component is a hemoprotein. Requires siroheme as cofactor. [4Fe-4S] cluster is required as a cofactor.

It catalyses the reaction hydrogen sulfide + 3 NADP(+) + 3 H2O = sulfite + 3 NADPH + 4 H(+). It participates in sulfur metabolism; hydrogen sulfide biosynthesis; hydrogen sulfide from sulfite (NADPH route): step 1/1. Component of the sulfite reductase complex that catalyzes the 6-electron reduction of sulfite to sulfide. This is one of several activities required for the biosynthesis of L-cysteine from sulfate. This is Sulfite reductase [NADPH] hemoprotein beta-component from Tolumonas auensis (strain DSM 9187 / NBRC 110442 / TA 4).